Reading from the N-terminus, the 558-residue chain is Atlastin-1 (558 aa).

The disordered stretch occupies residues 1 to 27 (MAKNRRDRNSWGGFSEKTYEWSSEEEE). Residues 1 to 34 (MAKNRRDRNSWGGFSEKTYEWSSEEEEPVKKAGP) are N-terminal hypervariable region (HVR). At 1–449 (MAKNRRDRNS…NIFHAARTPA (449 aa)) the chain is on the cytoplasmic side. 3 positions are modified to phosphoserine: S10, S22, and S23. One can recognise a GB1/RHD3-type G domain in the interval 64–309 (DKEVVAVSVA…LIPWLLSPES (246 aa)). The GDP site is built by R77, K78, G79, K80, S81, F82, Q148, R217, D218, V276, and N279. GTP contacts are provided by R77, K78, G79, K80, S81, and F82. S81 contacts Mg(2+). GTP is bound by residues R217, D218, and V276. Residues 347–438 (MLQATAEANN…YIQYIKHNDS (92 aa)) form a 3HB (three-helix bundle) domain region. Position 395 is an N6-acetyllysine (K395). Residues 412-439 (EFSRRYLQQLESEIDELYIQYIKHNDSK) adopt a coiled-coil conformation. The linker stretch occupies residues 439 to 447 (KNIFHAART). The chain crosses the membrane as a helical span at residues 450–470 (TLFVVIFITYVIAGVTGFIGL). D471 is a topological domain (lumenal). The helical transmembrane segment at 472–492 (IIASLCNMIMGLTLITLCTWA) threads the bilayer. Topologically, residues 493 to 558 (YIRYSGEYRE…STEQSEKKKM (66 aa)) are cytoplasmic. The interval 521 to 558 (NEALYKLYSAAATHRHLYHQAFPTPKSESTEQSEKKKM) is autoinhibitory domain.

Belongs to the TRAFAC class dynamin-like GTPase superfamily. GB1/RHD3 GTPase family. GB1 subfamily. In terms of assembly, monomeric and homodimeric. The homodimer, transiently formed by two molecules on opposing membranes, is the active form mediating ER membrane fusion. Interacts with REEP1, REEP5, RTN3 and RTN4 (via the transmembrane region); these proteins are involved in endoplasmic reticulum tubular network organization. Interacts with ZFYVE27; both proteins are involved in endoplasmic reticulum tubular network organization. Interacts with ARL6IP1; both proteins are involved in endoplasmic reticulum tubular network organization. Interacts with SPAST; the interaction is direct, could recruit SPAST to Golgi membranes. Interacts (via N-terminal region) with MAP4K4 (via CNH regulatory domain). May interact with TMED2. Interacts with CPT1C. In terms of processing, phosphorylated. Phosphorylation, by different kinases, of the N-terminal hypervariable region (HVR) regulates the ATL1-mediated membrane tethering step.

The protein resides in the endoplasmic reticulum membrane. It is found in the golgi apparatus membrane. The protein localises to the cell projection. It localises to the axon. It catalyses the reaction GTP + H2O = GDP + phosphate + H(+). Functionally, atlastin-1 (ATL1) is a membrane-anchored GTPase that mediates the GTP-dependent fusion of endoplasmic reticulum (ER) membranes, maintaining the continuous ER network. It facilitates the formation of three-way junctions where ER tubules intersect. Two atlastin-1 on neighboring ER tubules bind GTP and form loose homodimers through the GB1/RHD3-type G domains and 3HB regions. Upon GTP hydrolysis, the 3HB regions tighten, pulling the membranes together to drive their fusion. After fusion, the homodimer disassembles upon release of inorganic phosphate (Pi). Subsequently, GDP dissociates, resetting the monomers to a conformation ready for a new fusion cycle. May also regulate more or less directly Golgi biogenesis. Indirectly regulates axonal development. The polypeptide is Atlastin-1 (Pongo abelii (Sumatran orangutan)).